The chain runs to 81 residues: Short neurotoxin 2 (81 aa).

Positions 1–21 (MKTLLLTLVVVTIVCLDLGYT) are cleaved as a signal peptide. Intrachain disulfides connect C24/C43, C38/C60, C62/C73, and C74/C79.

It belongs to the three-finger toxin family. Short-chain subfamily. Type I alpha-neurotoxin sub-subfamily. As to expression, expressed by the venom gland.

The protein resides in the secreted. Functionally, binds to muscle nicotinic acetylcholine receptor (nAChR) and inhibit acetylcholine from binding to the receptor, thereby impairing neuromuscular transmission. The sequence is that of Short neurotoxin 2 from Tropidechis carinatus (Australian rough-scaled snake).